We begin with the raw amino-acid sequence, 218 residues long: MTTLPFPLAEAPDALTEERGRKLFAGNTDFLKGVVAMDGLPPADRIEVCFAGRSNVGKSTLINALTGRKGLARASNTPGRTQEINYFTLLDSHYLVDLPGYGYAEAPLHVVQQWQALLKSYLQGRATLRRAFVLIDARHGVKAVDEEIMKLLDIAAVPFQTVLTKSDKVKGRDRDASLARTRKALANHPAAYPEIILTSSEKGDGIPTLRATIATIET.

The region spanning 44 to 218 is the EngB-type G domain; it reads DRIEVCFAGR…LRATIATIET (175 aa). GTP is bound by residues 52-59, 79-83, 97-100, 164-167, and 198-200; these read GRSNVGKS, GRTQE, DLPG, TKSD, and TSS. The Mg(2+) site is built by Ser59 and Thr81.

Belongs to the TRAFAC class TrmE-Era-EngA-EngB-Septin-like GTPase superfamily. EngB GTPase family. Mg(2+) is required as a cofactor.

Its function is as follows. Necessary for normal cell division and for the maintenance of normal septation. The protein is Probable GTP-binding protein EngB of Jannaschia sp. (strain CCS1).